A 713-amino-acid polypeptide reads, in one-letter code: Cyclomaltodextrin glucanotransferase (713 aa).

The N-terminal stretch at 1 to 27 (MKKISKLTTALALSLSLALSLLGPAHA) is a signal peptide. Residues 28-165 (APDTSVSNKQ…NIKVIIDFAP (138 aa)) form an A1 region. Residues aspartate 54, asparagine 56, asparagine 59, and asparagine 60 each coordinate Ca(2+). A disulfide bridge links cysteine 70 with cysteine 77. 2 residues coordinate Ca(2+): glycine 78 and aspartate 80. 127 to 128 (YW) lines the substrate pocket. A Ca(2+)-binding site is contributed by asparagine 166. The interval 166–229 (NHTSPASLDQ…NLYDLADLNH (64 aa)) is b. Position 167 (histidine 167) interacts with substrate. A Ca(2+)-binding site is contributed by isoleucine 217. Residue 220-223 (NLYD) participates in substrate binding. Position 226 (aspartate 226) interacts with Ca(2+). Positions 230 to 433 (NNSTVDTYLK…LRKSNPAIAY (204 aa)) are A2. Arginine 254 provides a ligand contact to substrate. Residue aspartate 256 is the Nucleophile of the active site. Residue 259–260 (KH) coordinates substrate. Histidine 260 provides a ligand contact to Ca(2+). Glutamate 284 acts as the Proton donor in catalysis. Substrate-binding residues include histidine 354, aspartate 398, and arginine 402. Residues 434-522 (GTTQERWINN…GTAVWQYTTA (89 aa)) form a c region. The segment at 523–609 (VTAPTIGHVG…SNVHDNFEVL (87 aa)) is d. The IPT/TIG domain occupies 526–607 (PTIGHVGPMM…TSSNVHDNFE (82 aa)). The 106-residue stretch at 608–713 (VLSGDQVSVR…TATINVNWQP (106 aa)) folds into the CBM20 domain. The tract at residues 610 to 713 (SGDQVSVRFV…TATINVNWQP (104 aa)) is e.

The protein belongs to the glycosyl hydrolase 13 family. Monomer. Ca(2+) is required as a cofactor.

It is found in the secreted. It carries out the reaction Cyclizes part of a (1-&gt;4)-alpha-D-glucan chain by formation of a (1-&gt;4)-alpha-D-glucosidic bond.. This chain is Cyclomaltodextrin glucanotransferase (cgt), found in Bacillus sp. (strain 17-1).